A 264-amino-acid chain; its full sequence is tRNA (guanine-N(1)-)-methyltransferase (264 aa).

S-adenosyl-L-methionine-binding positions include Gly-113 and 133–138 (IGDYVL). A disordered region spans residues 244–264 (VQQAATPGGQRRPPWHRDSRA).

It belongs to the RNA methyltransferase TrmD family. Homodimer.

It is found in the cytoplasm. It carries out the reaction guanosine(37) in tRNA + S-adenosyl-L-methionine = N(1)-methylguanosine(37) in tRNA + S-adenosyl-L-homocysteine + H(+). In terms of biological role, specifically methylates guanosine-37 in various tRNAs. This Frankia alni (strain DSM 45986 / CECT 9034 / ACN14a) protein is tRNA (guanine-N(1)-)-methyltransferase.